The primary structure comprises 860 residues: JmjC domain-containing histone demethylation protein 1 (860 aa).

Disordered regions lie at residues 1–45, 117–212, and 408–440; these read MSEQ…EEGK, STSP…PKRK, and DVKEKGRGNDSREGSEIRKEGSHLTEGDNGGEI. Residues 23–116 form a PHD-type zinc finger; that stretch reads PEPCPLCRET…KWYCAPCLAR (94 aa). 2 stretches are compositionally biased toward basic and acidic residues: residues 183 to 192 and 408 to 433; these read IDMKSEREQQ and DVKEKGRGNDSREGSEIRKEGSHLTE. Residues 416–579 form the JmjC domain; the sequence is NDSREGSEIR…TQLRLRQIEI (164 aa). T471 provides a ligand contact to substrate. The Fe cation site is built by H474 and D476. Residue K491 participates in substrate binding. Fe cation is bound at residue H547. Disordered stretches follow at residues 744–795 and 837–860; these read HPPA…ANEN and GPKLDKEKISQPQGKVEEDMDIDH. Positions 750 to 763 are enriched in polar residues; it reads ENRQSPQIETTTVQ. Over residues 767–795 the composition is skewed to low complexity; the sequence is PSTSSSDAISGSGPGASPGASANGGANEN.

Belongs to the JHDM1 histone demethylase family. Fe(2+) is required as a cofactor.

It localises to the nucleus. The catalysed reaction is N(6),N(6)-dimethyl-L-lysyl(36)-[histone H3] + 2 2-oxoglutarate + 2 O2 = L-lysyl(36)-[histone H3] + 2 formaldehyde + 2 succinate + 2 CO2. Its function is as follows. Histone demethylase that specifically demethylates 'Lys-36' of histone H3, thereby playing a central role in histone code. The protein is JmjC domain-containing histone demethylation protein 1 (JHD1) of Cryptococcus neoformans var. neoformans serotype D (strain JEC21 / ATCC MYA-565) (Filobasidiella neoformans).